The following is a 309-amino-acid chain: Sporulation sigma-E factor-processing peptidase (309 aa).

Transmembrane regions (helical) follow at residues 7-27, 36-55, 61-78, 88-105, and 130-147; these read VIWL…AFIL, LVGG…TPFS, PAGK…TFGF, LFSF…IIGA, and PISW…WFFS. Aspartate 183 is an active-site residue.

The protein belongs to the peptidase U4 family. In terms of assembly, self-associates. Interacts with SigE. Interacts with SpoIIR.

The protein localises to the cell membrane. In terms of biological role, probable aspartic protease that is responsible for the proteolytic cleavage of the RNA polymerase sigma E factor (SigE/spoIIGB) to yield the active peptide in the mother cell during sporulation. Responds to a signal from the forespore that is triggered by the extracellular signal protein SpoIIR. The chain is Sporulation sigma-E factor-processing peptidase (spoIIGA) from Bacillus subtilis (strain 168).